A 704-amino-acid polypeptide reads, in one-letter code: Elongation factor G (704 aa).

Positions 10-290 (KKVRNIGIMA…AVVDYLPSPL (281 aa)) constitute a tr-type G domain. Residues 19–26 (AHIDAGKT), 83–87 (DTPGH), and 137–140 (NKMD) each bind GTP.

The protein belongs to the TRAFAC class translation factor GTPase superfamily. Classic translation factor GTPase family. EF-G/EF-2 subfamily.

It is found in the cytoplasm. In terms of biological role, catalyzes the GTP-dependent ribosomal translocation step during translation elongation. During this step, the ribosome changes from the pre-translocational (PRE) to the post-translocational (POST) state as the newly formed A-site-bound peptidyl-tRNA and P-site-bound deacylated tRNA move to the P and E sites, respectively. Catalyzes the coordinated movement of the two tRNA molecules, the mRNA and conformational changes in the ribosome. This Kocuria rhizophila (strain ATCC 9341 / DSM 348 / NBRC 103217 / DC2201) protein is Elongation factor G.